We begin with the raw amino-acid sequence, 99 residues long: DNA-directed RNA polymerase subunit omega (99 aa).

It belongs to the RNA polymerase subunit omega family. As to quaternary structure, the RNAP catalytic core consists of 2 alpha, 1 beta, 1 beta' and 1 omega subunit. When a sigma factor is associated with the core the holoenzyme is formed, which can initiate transcription.

The catalysed reaction is RNA(n) + a ribonucleoside 5'-triphosphate = RNA(n+1) + diphosphate. Functionally, promotes RNA polymerase assembly. Latches the N- and C-terminal regions of the beta' subunit thereby facilitating its interaction with the beta and alpha subunits. This Xylella fastidiosa (strain Temecula1 / ATCC 700964) protein is DNA-directed RNA polymerase subunit omega.